The following is a 354-amino-acid chain: 3-dehydroquinate synthase (354 aa).

NAD(+) is bound by residues 100-104 (GATGD), 124-125 (TT), K136, K145, and 163-166 (FLKT). Residues E178, H242, and H256 each coordinate Zn(2+).

The protein belongs to the sugar phosphate cyclases superfamily. Dehydroquinate synthase family. Requires NAD(+) as cofactor. Co(2+) is required as a cofactor. Zn(2+) serves as cofactor.

The protein localises to the cytoplasm. It carries out the reaction 7-phospho-2-dehydro-3-deoxy-D-arabino-heptonate = 3-dehydroquinate + phosphate. Its pathway is metabolic intermediate biosynthesis; chorismate biosynthesis; chorismate from D-erythrose 4-phosphate and phosphoenolpyruvate: step 2/7. Its function is as follows. Catalyzes the conversion of 3-deoxy-D-arabino-heptulosonate 7-phosphate (DAHP) to dehydroquinate (DHQ). The protein is 3-dehydroquinate synthase of Staphylococcus aureus (strain COL).